The primary structure comprises 385 residues: Succinate--CoA ligase [ADP-forming] subunit beta (385 aa).

The ATP-grasp domain maps to 9-241 (KELLRDFGIN…IDEEEPSELE (233 aa)). Residues lysine 46, 53–55 (GRG), glutamate 99, threonine 102, and glutamate 107 each bind ATP. Residues asparagine 196 and aspartate 210 each coordinate Mg(2+). Substrate contacts are provided by residues asparagine 261 and 318-320 (GIV).

It belongs to the succinate/malate CoA ligase beta subunit family. In terms of assembly, heterotetramer of two alpha and two beta subunits. It depends on Mg(2+) as a cofactor.

It carries out the reaction succinate + ATP + CoA = succinyl-CoA + ADP + phosphate. The enzyme catalyses GTP + succinate + CoA = succinyl-CoA + GDP + phosphate. Its pathway is carbohydrate metabolism; tricarboxylic acid cycle; succinate from succinyl-CoA (ligase route): step 1/1. Its function is as follows. Succinyl-CoA synthetase functions in the citric acid cycle (TCA), coupling the hydrolysis of succinyl-CoA to the synthesis of either ATP or GTP and thus represents the only step of substrate-level phosphorylation in the TCA. The beta subunit provides nucleotide specificity of the enzyme and binds the substrate succinate, while the binding sites for coenzyme A and phosphate are found in the alpha subunit. The polypeptide is Succinate--CoA ligase [ADP-forming] subunit beta (Campylobacter fetus subsp. fetus (strain 82-40)).